Consider the following 522-residue polypeptide: Cytochrome P450 monooxygenase FGSG_08207 (522 aa).

A helical membrane pass occupies residues 10-30 (LLLSKPVVLGLAACALLFLIG). Residues N104 and N155 are each glycosylated (N-linked (GlcNAc...) asparagine). C441 lines the heme pocket.

Belongs to the cytochrome P450 family. Heme is required as a cofactor.

It localises to the membrane. Its pathway is secondary metabolite biosynthesis. Functionally, cytochrome P450 monooxygenase; part of the gene cluster that mediates the biosynthesis of the lipopeptide fusaristatin A. Fusaristatin A consists of a polyketide chain linked to three amino acid residues glutamine (Gln), dehydroalanine (dehydro-Ala), and beta-aminoisobutyric acid. The biosynthesis starts with formation of a linear polyketide chain by the highly reducing polyketide synthase PKS6. The gene cluster does not contain an acyl-CoA ligase or an acyl-transferase, and it is therefore predicted that the polyketide is transferred directly to the nonribosomal peptide synthetase NRPS7. Modules 1-3 from NRPS7 incorporate dehydro-Ala, Gln, and beta-aminoisobutyric acid in the compound, which is released by cyclization. The beta-aminoisobutyric acid units are most likely not freely available to the NRPS, but can be synthesized from thymine, which requires a dehydrogenase, a monooxygenase, and an aminotransferase. The fusaristatin A cluster contains a cytochrome P450 monooxygenase (FGSG_08207) and an aminotransferase (FGSG_17085), which theoretically can perform two of the enzymatic steps. The enzymes may however also be involved in biosynthesis of dehydroalanine or modification of the polyketide. The dehydro-Ala residue can be a result of cyclization, where serine is dehydrated. The last gene of the cluster encodes a protein with an A/B barrel domain found in variable enzymes, which hampers functional prediction. The chain is Cytochrome P450 monooxygenase FGSG_08207 from Gibberella zeae (strain ATCC MYA-4620 / CBS 123657 / FGSC 9075 / NRRL 31084 / PH-1) (Wheat head blight fungus).